We begin with the raw amino-acid sequence, 295 residues long: Protease HtpX (295 aa).

Helical transmembrane passes span 4 to 24 (ILLF…TLSL) and 41 to 61 (SSLL…SLFI). His147 contributes to the Zn(2+) binding site. The active site involves Glu148. His151 contributes to the Zn(2+) binding site. Transmembrane regions (helical) follow at residues 158 to 178 (VTLA…ARII) and 199 to 219 (VATI…VMWF). A Zn(2+)-binding site is contributed by Glu224.

Belongs to the peptidase M48B family. Requires Zn(2+) as cofactor.

The protein localises to the cell inner membrane. This Pseudomonas putida (strain W619) protein is Protease HtpX.